The following is a 357-amino-acid chain: MKKYKIIMTGGGSAGHVTPNLALVPKLKELGFEIKYIGSKNGIEKEIITKENIPYYSISSGKLRRYFDIKNFTDPFKVLKGVMDASRILSKEKPDVIFSKGGFVTVPVVIAASMKKIPVVSHESDLTPGLANKIASPFCDTLCVTFPESLKYIKDNKGKLTGTPIREDLLKGDKERGRKFCNFKENKKVLMIIGGSLGSKIINESVRKILNEILKEYNVIHLCGKGNLDESLKNLEGYRQYEYISEELPDLMALADLVISRAGANTIFELLALRKLNILIPLSANASRGDQVLNANSFEKSGYSMVIKEEELNSELLLKSIKDLEKNREKYLNSMKMSKIGNGVNNIIDIIKKSAHM.

UDP-N-acetyl-alpha-D-glucosamine contacts are provided by residues 13–15, Arg166, Ser196, and Gln291; that span reads SAG.

Belongs to the glycosyltransferase 28 family. MurG subfamily.

The protein resides in the cell membrane. The catalysed reaction is di-trans,octa-cis-undecaprenyl diphospho-N-acetyl-alpha-D-muramoyl-L-alanyl-D-glutamyl-meso-2,6-diaminopimeloyl-D-alanyl-D-alanine + UDP-N-acetyl-alpha-D-glucosamine = di-trans,octa-cis-undecaprenyl diphospho-[N-acetyl-alpha-D-glucosaminyl-(1-&gt;4)]-N-acetyl-alpha-D-muramoyl-L-alanyl-D-glutamyl-meso-2,6-diaminopimeloyl-D-alanyl-D-alanine + UDP + H(+). The protein operates within cell wall biogenesis; peptidoglycan biosynthesis. Cell wall formation. Catalyzes the transfer of a GlcNAc subunit on undecaprenyl-pyrophosphoryl-MurNAc-pentapeptide (lipid intermediate I) to form undecaprenyl-pyrophosphoryl-MurNAc-(pentapeptide)GlcNAc (lipid intermediate II). This Clostridium perfringens (strain SM101 / Type A) protein is UDP-N-acetylglucosamine--N-acetylmuramyl-(pentapeptide) pyrophosphoryl-undecaprenol N-acetylglucosamine transferase.